A 230-amino-acid polypeptide reads, in one-letter code: Acyl-protein thioesterase 1 (230 aa).

Catalysis depends on charge relay system residues Ser-119, Asp-174, and His-208. N6-acetyllysine is present on Lys-224.

It belongs to the AB hydrolase superfamily. AB hydrolase 2 family. Homodimer. Platelets.

Its subcellular location is the cytoplasm. The protein resides in the cell membrane. It localises to the nucleus membrane. The protein localises to the endoplasmic reticulum. The catalysed reaction is S-hexadecanoyl-L-cysteinyl-[protein] + H2O = L-cysteinyl-[protein] + hexadecanoate + H(+). It catalyses the reaction 1-hexadecanoyl-sn-glycero-3-phosphocholine + H2O = sn-glycerol 3-phosphocholine + hexadecanoate + H(+). The enzyme catalyses a 1-(9Z-octadecenoyl)-2-acyl-sn-glycero-3-phosphocholine + H2O = a 2-acyl-sn-glycero-3-phosphocholine + (9Z)-octadecenoate + H(+). Inhibited by palmostatin-B, leading to impair depalmitoylating of Ras. In terms of biological role, acts as an acyl-protein thioesterase. Hydrolyzes fatty acids from S-acylated cysteine residues in proteins such as trimeric G alpha proteins or HRAS. Acts as a palmitoyl thioesterase that catalyzes depalmitoylation of proteins, such as ADRB2, KCNMA1 and SQSTM1. Acts as a negative regulator of autophagy by mediating palmitoylation of SQSTM1, decreasing affinity between SQSTM1 and ATG8 proteins and recruitment of ubiquitinated cargo proteins to autophagosomes. Acts as a lysophospholipase and hydrolyzes lysophosphatidylcholine (lyso-PC). Also hydrolyzes lysophosphatidylethanolamine (lyso-PE), lysophosphatidylinositol (lyso-PI) and lysophosphatidylserine (lyso-PS). Has much higher thioesterase activity than lysophospholipase activity. Contributes to the production of lysophosphatidic acid (LPA) during blood coagulation by recognizing and cleaving plasma phospholipids to generate lysophospholipids which in turn act as substrates for ENPP2 to produce LPA. The chain is Acyl-protein thioesterase 1 (LYPLA1) from Homo sapiens (Human).